The sequence spans 720 residues: DNA ligase (720 aa).

NAD(+) contacts are provided by residues 57–61 (DAEYD), 106–107 (SL), and Glu140. Residue Lys142 is the N6-AMP-lysine intermediate of the active site. Residues Arg163, Glu200, Lys316, and Lys340 each coordinate NAD(+). Zn(2+) contacts are provided by Cys434, Cys437, Cys458, and Cys464. The 78-residue stretch at 643–720 (AAASPVSGKT…TEDEWFELVG (78 aa)) folds into the BRCT domain.

It belongs to the NAD-dependent DNA ligase family. LigA subfamily. The cofactor is Mg(2+). Requires Mn(2+) as cofactor.

It carries out the reaction NAD(+) + (deoxyribonucleotide)n-3'-hydroxyl + 5'-phospho-(deoxyribonucleotide)m = (deoxyribonucleotide)n+m + AMP + beta-nicotinamide D-nucleotide.. Its function is as follows. DNA ligase that catalyzes the formation of phosphodiester linkages between 5'-phosphoryl and 3'-hydroxyl groups in double-stranded DNA using NAD as a coenzyme and as the energy source for the reaction. It is essential for DNA replication and repair of damaged DNA. The sequence is that of DNA ligase from Xanthobacter autotrophicus (strain ATCC BAA-1158 / Py2).